The primary structure comprises 68 residues: Conotoxin mr3g (68 aa).

A signal peptide spans 1–19 (MSKLGVLLTICLLLFALTA). Residues 20 to 51 (VPLDGDQPADRPAERMQDDISSERHPMFDAVR) constitute a propeptide that is removed on maturation. Disulfide bonds link Cys-53/Cys-67, Cys-54/Cys-63, and Cys-59/Cys-66. 4-hydroxyproline occurs at positions 55 and 65. A Cysteine amide modification is found at Cys-67.

Expressed by the venom duct.

The protein localises to the secreted. Its function is as follows. Intracranially injection into mice does not elicit symptoms. The chain is Conotoxin mr3g from Conus marmoreus (Marble cone).